The primary structure comprises 68 residues: DNA-directed RNA polymerase subunit Rpo10 (68 aa).

Zn(2+) contacts are provided by C7, C10, C44, and C45.

The protein belongs to the archaeal Rpo10/eukaryotic RPB10 RNA polymerase subunit family. In terms of assembly, part of the RNA polymerase complex. Zn(2+) serves as cofactor.

It is found in the cytoplasm. It catalyses the reaction RNA(n) + a ribonucleoside 5'-triphosphate = RNA(n+1) + diphosphate. In terms of biological role, DNA-dependent RNA polymerase (RNAP) catalyzes the transcription of DNA into RNA using the four ribonucleoside triphosphates as substrates. The chain is DNA-directed RNA polymerase subunit Rpo10 from Methanococcus maripaludis (strain C5 / ATCC BAA-1333).